A 182-amino-acid polypeptide reads, in one-letter code: Large ribosomal subunit protein uL6 (182 aa).

The protein belongs to the universal ribosomal protein uL6 family. Part of the 50S ribosomal subunit.

This protein binds to the 23S rRNA, and is important in its secondary structure. It is located near the subunit interface in the base of the L7/L12 stalk, and near the tRNA binding site of the peptidyltransferase center. This Methanococcus maripaludis (strain C5 / ATCC BAA-1333) protein is Large ribosomal subunit protein uL6.